The primary structure comprises 616 residues: Spastin (616 aa).

The disordered stretch occupies residues 1–44 (MNSPGGRGKKKGSGGPSSPVPPRPPPPCLASSRPAPRPAPPPQS). Positions 1 to 50 (MNSPGGRGKKKGSGGPSSPVPPRPPPPCLASSRPAPRPAPPPQSPHKRNL) are required for nuclear localization. Over 1–56 (MNSPGGRGKKKGSGGPSSPVPPRPPPPCLASSRPAPRPAPPPQSPHKRNLYYFSYP) the chain is Cytoplasmic. Residues 1-80 (MNSPGGRGKK…LGLLFVWLCQ (80 aa)) form a required for interaction with ATL1 region. The tract at residues 1–194 (MNSPGGRGKK…LVMAKDRLQL (194 aa)) is required for midbody localization. A required for interaction with RTN1 region spans residues 1 to 300 (MNSPGGRGKK…STPKTNRTNK (300 aa)). The Nuclear localization signal signature appears at 4-11 (PGGRGKKK). Composition is skewed to pro residues over residues 18–28 (SPVPPRPPPPC) and 35–44 (APRPAPPPQS). Positions 50–87 (LYYFSYPLFLGFALLRLVAFHLGLLFVWLCQRFSRALM) are required for interaction with SSNA1 and microtubules. Positions 57–77 (LFLGFALLRLVAFHLGLLFVW) form an intramembrane region, helical. Positions 59-67 (LGFALLRLV) match the Nuclear export signal motif. At 78–616 (LCQRFSRALM…WNKDFGDTTV (539 aa)) the chain is on the cytoplasmic side. A sufficient for interaction with CHMP1B region spans residues 112-196 (EVERVRAFHK…MAKDRLQLLE (85 aa)). The interval 114 to 200 (ERVRAFHKQA…RLQLLEKLQP (87 aa)) is required for interaction with microtubules. The region spanning 120-195 (HKQAFEYISV…VMAKDRLQLL (76 aa)) is the MIT domain. The segment at 223–266 (GHLQSESGAVPKRKDPLTHPSNSLPRSKAIMKTGSTGLSGHHRA) is disordered. The segment at 226–328 (QSESGAVPKR…NVDSNLANFI (103 aa)) is sufficient for interaction with microtubules. The sufficient for microtubule severing stretch occupies residues 228–616 (ESGAVPKRKD…WNKDFGDTTV (389 aa)). Residues Ser245 and Ser268 each carry the phosphoserine modification. The required for interaction with microtubules and microtubule severing stretch occupies residues 270–328 (SGLSIVSGMRQGPGPTTATHKSTPKTNRTNKPSTPTTAPRKKKDLKNFRNVDSNLANFI). The interval 278-311 (MRQGPGPTTATHKSTPKTNRTNKPSTPTTAPRKK) is disordered. The span at 283 to 306 (GPTTATHKSTPKTNRTNKPSTPTT) shows a compositional bias: polar residues. The residue at position 306 (Thr306) is a Phosphothreonine. Residues 309-312 (RKKK) carry the Nuclear localization signal motif. Residues 310–312 (KKK) are required for interaction with microtubules. 382 to 389 (GPPGNGKT) provides a ligand contact to ATP. Residue Ser597 is modified to Phosphoserine.

Belongs to the AAA ATPase family. Spastin subfamily. Homohexamer. Mostly monomeric, but assembles into hexameric structure for short periods of time. Oligomerization seems to be a prerequisite for catalytic activity. Binding to ATP in a cleft between two adjacent subunits stabilizes the homohexameric form. Binds to microtubules at least in part via the alpha-tubulin and beta-tubulin tails. The hexamer adopts a ring conformation through which microtubules pass prior to being severed. Does not interact strongly with tubulin heterodimers. Interacts (via MIT domain) with CHMP1B; the interaction is direct. Interacts with SSNA1. Interacts with ATL1. Interacts with RTN1. Interacts with ZFYVE27. Interacts with REEP1. Interacts (via MIT domain) with IST1.

Its subcellular location is the membrane. The protein resides in the endoplasmic reticulum. The protein localises to the midbody. It localises to the cytoplasm. It is found in the cytoskeleton. Its subcellular location is the microtubule organizing center. The protein resides in the centrosome. The protein localises to the perinuclear region. It localises to the nucleus. It is found in the spindle. Its subcellular location is the cell projection. The protein resides in the axon. The enzyme catalyses n ATP + n H2O + a microtubule = n ADP + n phosphate + (n+1) alpha/beta tubulin heterodimers.. Allosteric enzyme with a cooperative mechanism; at least two neighbor subunits influence each other strongly in spastin hexamers. Microtubule binding promotes cooperative interactions among spastin subunits. Functionally, ATP-dependent microtubule severing protein that specifically recognizes and cuts microtubules that are polyglutamylated. Preferentially recognizes and acts on microtubules decorated with short polyglutamate tails: severing activity increases as the number of glutamates per tubulin rises from one to eight, but decreases beyond this glutamylation threshold. Severing activity is not dependent on tubulin acetylation or detyrosination. Microtubule severing promotes reorganization of cellular microtubule arrays and the release of microtubules from the centrosome following nucleation. It is critical for the biogenesis and maintenance of complex microtubule arrays in axons, spindles and cilia. SPAST is involved in abscission step of cytokinesis and nuclear envelope reassembly during anaphase in cooperation with the ESCRT-III complex. Recruited at the midbody, probably by IST1, and participates in membrane fission during abscission together with the ESCRT-III complex. Recruited to the nuclear membrane by IST1 and mediates microtubule severing, promoting nuclear envelope sealing and mitotic spindle disassembly during late anaphase. Required for membrane traffic from the endoplasmic reticulum (ER) to the Golgi and endosome recycling. Recruited by IST1 to endosomes and regulates early endosomal tubulation and recycling by mediating microtubule severing. Probably plays a role in axon growth and the formation of axonal branches. The protein is Spastin of Sus scrofa (Pig).